A 248-amino-acid chain; its full sequence is MARNVRLKVEYDGTNYSGWQKQKDKNIKTIQSSIEKAIEEATKEEVELIGSSRTDAGVHALAYTANFKTCSTIPGEKFKHALNRFLPEDIVILESEEVPMEFHSRFDCIGKTYVYKILNRPLFSPIQRNYIYHVKDELDINSMIEASKFLIGTHDFNAFKKSGGNLKTTVRTITNINILKSNDIVEIHVSGDGFLYNMVRIISGTLIEVGLSRRKPEDISIILQSKDRCKAGMCAPARGLYLKELFYN.

The active-site Nucleophile is the aspartate 55. Position 113 (tyrosine 113) interacts with substrate.

This sequence belongs to the tRNA pseudouridine synthase TruA family. As to quaternary structure, homodimer.

The enzyme catalyses uridine(38/39/40) in tRNA = pseudouridine(38/39/40) in tRNA. In terms of biological role, formation of pseudouridine at positions 38, 39 and 40 in the anticodon stem and loop of transfer RNAs. This is tRNA pseudouridine synthase A 2 from Clostridium tetani (strain Massachusetts / E88).